A 201-amino-acid chain; its full sequence is Ribosome maturation factor RimP (201 aa).

This sequence belongs to the RimP family.

The protein resides in the cytoplasm. Its function is as follows. Required for maturation of 30S ribosomal subunits. The protein is Ribosome maturation factor RimP of Acidiphilium cryptum (strain JF-5).